The following is a 471-amino-acid chain: Putative multidrug resistance protein MdtD (471 aa).

At 1–12 the chain is on the periplasmic side; the sequence is MTDLPDSTRWQL. A helical transmembrane segment spans residues 13–33; the sequence is WIVAFGFFMQSLDTTIVNTAI. Residues 34 to 48 are Cytoplasmic-facing; sequence PSMAQSLGESPLHMH. The chain crosses the membrane as a helical span at residues 49–69; that stretch reads MVIVSYVLTVAVMLPASGWLA. Over 70–76 the chain is Periplasmic; sequence DKVGVRN. The chain crosses the membrane as a helical span at residues 77-97; that stretch reads IFFTAIVLFTLGSLFCALSGT. Over 98–101 the chain is Cytoplasmic; sequence LNEL. The chain crosses the membrane as a helical span at residues 102–124; it reads LLARALQGVGGAMMVPVGRLTVM. The Periplasmic segment spans residues 125–137; sequence KIVPREQYMAAMT. Residues 138–158 traverse the membrane as a helical segment; that stretch reads FVTLPGQVGPLLGPALGGLLV. Topologically, residues 159–164 are cytoplasmic; the sequence is EYASWH. A helical membrane pass occupies residues 165-185; the sequence is WIFLINIPVGIIGAIATLMLM. The Periplasmic segment spans residues 186–196; that stretch reads PNYTMQTRRFD. Residues 197–217 form a helical membrane-spanning segment; that stretch reads LSGFLLLAVGMAVLTLALDGS. Residues 218-224 lie on the Cytoplasmic side of the membrane; it reads KGTGLSP. The helical transmembrane segment at 225-245 threads the bilayer; that stretch reads LAIAGLVAVGVVALVLYLLHA. Residues 246-262 are Periplasmic-facing; sequence RNNNRALFSLKLFRTRT. Residues 263-283 traverse the membrane as a helical segment; sequence FSLGLAGSFAGRIGSGMLPFM. The Cytoplasmic portion of the chain corresponds to 284–285; that stretch reads TP. A helical membrane pass occupies residues 286-306; the sequence is VFLQIGLGFSPFHAGLMMIPM. Residues 307–341 are Periplasmic-facing; the sequence is VLGSMGMKRIVVQVVNRFGYRRVLVATTLGLSLVT. A helical transmembrane segment spans residues 342-362; it reads LLFMTTALLGWYYVLPFVLFL. Residues 363–395 lie on the Cytoplasmic side of the membrane; that stretch reads QGMVNSTRFSSMNTLTLKDLPDNLASSGNSLLS. The chain crosses the membrane as a helical span at residues 396–416; that stretch reads MIMQLSMSIGVTIAGLLLGLF. Topologically, residues 417-430 are periplasmic; that stretch reads GSQHVSVDSGTTQT. A helical membrane pass occupies residues 431–451; the sequence is VFMYTWLSMAFIIALPAFIFA. Residues 452–471 are Cytoplasmic-facing; sequence RVPNDTHQNVAISRRKRSAQ.

The protein belongs to the major facilitator superfamily. TCR/Tet family.

Its subcellular location is the cell inner membrane. The polypeptide is Putative multidrug resistance protein MdtD (Shigella flexneri serotype 5b (strain 8401)).